Reading from the N-terminus, the 379-residue chain is Polycomb group protein FIE2 (379 aa).

6 WD repeats span residues 85–128 (DKDE…LAKS), 131–171 (GHGD…CILI), 177–217 (GHRN…LYVD), 243–280 (VHSNYVDCTRWLGDFILSKSVDNEIVLWEPKTKEQSPG), 292–333 (VPEC…PVLI), and 340–378 (QCKSPIRQTAVSFDGSTILGAGEDGTIWRWDEVDHPSSR).

Belongs to the WD repeat ESC family. In terms of tissue distribution, widely expressed. Expressed in the embryo sac before pollination. After pollination, its expression persists, predominantly in the embryo and at lower levels in the endosperm.

The protein localises to the nucleus. Polycomb group (PcG) protein. PcG proteins act by forming multiprotein complexes, which are required to maintain the transcriptionally repressive state of homeotic genes throughout development. PcG proteins are not required to initiate repression, but to maintain it during later stages of development. They probably act via the methylation of histones, rendering chromatin heritably changed in its expressibility. In Zea mays (Maize), this protein is Polycomb group protein FIE2 (FIE2).